The primary structure comprises 456 residues: Zinc finger protein 25 (456 aa).

Residues 8–79 (VTLKDVIVEF…EVEFPHRGFP (72 aa)) form the KRAB domain. 12 C2H2-type zinc fingers span residues 118-140 (CECK…QHTH), 146-168 (YDCD…QKIH), 174-196 (YECK…LRTH), 202-224 (YECN…QKTH), 230-252 (FECT…QKTH), 258-280 (YECK…QRMH), 286-308 (YKCK…QRSH), 314-336 (YECK…QRTH), 342-364 (FECN…QRKH), 370-392 (YECT…QRTH), 398-420 (YACK…QRKH), and 426-448 (YECQ…QKTH).

This sequence belongs to the krueppel C2H2-type zinc-finger protein family.

It is found in the nucleus. In terms of biological role, may be involved in transcriptional regulation. This Homo sapiens (Human) protein is Zinc finger protein 25 (ZNF25).